The sequence spans 579 residues: Proline--tRNA ligase (579 aa).

The protein belongs to the class-II aminoacyl-tRNA synthetase family. ProS type 1 subfamily. Homodimer.

The protein resides in the cytoplasm. It catalyses the reaction tRNA(Pro) + L-proline + ATP = L-prolyl-tRNA(Pro) + AMP + diphosphate. In terms of biological role, catalyzes the attachment of proline to tRNA(Pro) in a two-step reaction: proline is first activated by ATP to form Pro-AMP and then transferred to the acceptor end of tRNA(Pro). As ProRS can inadvertently accommodate and process non-cognate amino acids such as alanine and cysteine, to avoid such errors it has two additional distinct editing activities against alanine. One activity is designated as 'pretransfer' editing and involves the tRNA(Pro)-independent hydrolysis of activated Ala-AMP. The other activity is designated 'posttransfer' editing and involves deacylation of mischarged Ala-tRNA(Pro). The misacylated Cys-tRNA(Pro) is not edited by ProRS. The polypeptide is Proline--tRNA ligase (Chlamydia muridarum (strain MoPn / Nigg)).